Here is a 489-residue protein sequence, read N- to C-terminus: PAT complex subunit CCDC47 (489 aa).

A signal peptide spans 1 to 20 (MILFTRLLAVSLLLVSGAFA). At 21 to 141 (KFQEFDDSDD…PAHLQNSWES (121 aa)) the chain is on the cytoplasmic side. Composition is skewed to acidic residues over residues 33–47 (EYDD…DAAD) and 62–103 (KEDE…EPYD). The segment at 33-103 (EYDDNDFAEF…EGDADAEPYD (71 aa)) is disordered. Residues 142 to 162 (YYMEILMVTGLLAYIMNYIIG) form a helical membrane-spanning segment. Topologically, residues 163-489 (KNKNSRLAQA…KMKQIKVKAM (327 aa)) are lumenal. Positions 428–489 (HVQRQEAAQT…KMKQIKVKAM (62 aa)) form a coiled coil. Residues 430 to 489 (QRQEAAQTRREEKKRAEKERIMNEEDPEKQRRLEEAAQRREQKKIEKKQMKMKQIKVKAM) form a disordered region. Residues 436-478 (QTRREEKKRAEKERIMNEEDPEKQRRLEEAAQRREQKKIEKKQ) are compositionally biased toward basic and acidic residues. The segment covering 479-489 (MKMKQIKVKAM) has biased composition (basic residues).

It belongs to the CCDC47 family. Component of the multi-pass translocon (MPT) complex.

The protein resides in the endoplasmic reticulum membrane. It is found in the rough endoplasmic reticulum membrane. Its function is as follows. Component of the multi-pass translocon (MPT) complex that mediates insertion of multi-pass membrane proteins into the lipid bilayer of membranes. The MPT complex takes over after the SEC61 complex: following membrane insertion of the first few transmembrane segments of proteins by the SEC61 complex, the MPT complex occludes the lateral gate of the SEC61 complex to promote insertion of subsequent transmembrane regions. The polypeptide is PAT complex subunit CCDC47 (ccdc47) (Xenopus laevis (African clawed frog)).